The primary structure comprises 447 residues: Glutamate-1-semialdehyde 2,1-aminomutase (447 aa).

The residue at position 277 (Lys-277) is an N6-(pyridoxal phosphate)lysine.

Belongs to the class-III pyridoxal-phosphate-dependent aminotransferase family. HemL subfamily. In terms of assembly, homodimer. It depends on pyridoxal 5'-phosphate as a cofactor.

Its subcellular location is the cytoplasm. The enzyme catalyses (S)-4-amino-5-oxopentanoate = 5-aminolevulinate. It participates in porphyrin-containing compound metabolism; protoporphyrin-IX biosynthesis; 5-aminolevulinate from L-glutamyl-tRNA(Glu): step 2/2. This Arthrobacter sp. (strain FB24) protein is Glutamate-1-semialdehyde 2,1-aminomutase.